The primary structure comprises 507 residues: Chromosomal replication initiator protein DnaA (507 aa).

The segment at 1–112 (MTDDPGSGFT…PATDEADDTT (112 aa)) is domain I, interacts with DnaA modulators. The disordered stretch occupies residues 99–162 (RIAPPATDEA…ERPRNTDSAT (64 aa)). The span at 113 to 127 (VPPSENPATTSPDTT) shows a compositional bias: polar residues. Positions 113–166 (VPPSENPATTSPDTTTDNDEIDDSAAARGDNQHSWPSYFTERPRNTDSATAGVT) are domain II. The domain III, AAA+ region stretch occupies residues 167-383 (SLNRRYTFDT…GALIRVTAFA (217 aa)). ATP-binding residues include glycine 211, glycine 213, lysine 214, and threonine 215. Residues 384 to 507 (SLNKTPIDKA…TTRIRQRSKR (124 aa)) form a domain IV, binds dsDNA region.

It belongs to the DnaA family. As to quaternary structure, oligomerizes as a right-handed, spiral filament on DNA at oriC.

The protein resides in the cytoplasm. In terms of biological role, plays an essential role in the initiation and regulation of chromosomal replication. ATP-DnaA binds to the origin of replication (oriC) to initiate formation of the DNA replication initiation complex once per cell cycle. Binds the DnaA box (a 9 base pair repeat at the origin) and separates the double-stranded (ds)DNA. Forms a right-handed helical filament on oriC DNA; dsDNA binds to the exterior of the filament while single-stranded (ss)DNA is stabiized in the filament's interior. The ATP-DnaA-oriC complex binds and stabilizes one strand of the AT-rich DNA unwinding element (DUE), permitting loading of DNA polymerase. After initiation quickly degrades to an ADP-DnaA complex that is not apt for DNA replication. Binds acidic phospholipids. The chain is Chromosomal replication initiator protein DnaA from Mycobacterium bovis (strain BCG / Tokyo 172 / ATCC 35737 / TMC 1019).